The sequence spans 364 residues: FNIP repeat-containing protein DDB_G0277323 (364 aa).

FNIP repeat units lie at residues 57-98, 155-198, 214-244, 245-271, and 295-340; these read MNIE…DLKY, YDCL…FGWT, LRVLKFGVSFNTEIQCNVLPNSIEKITFGSS, FNQVILPNSLPRNLRILKFGSSFNQPI, and FNQP…FINN.

The polypeptide is FNIP repeat-containing protein DDB_G0277323 (Dictyostelium discoideum (Social amoeba)).